We begin with the raw amino-acid sequence, 119 residues long: Basic phospholipase A2 notexin (119 aa).

7 cysteine pairs are disulfide-bonded: Cys11–Cys71, Cys27–Cys118, Cys29–Cys45, Cys44–Cys99, Cys51–Cys92, Cys60–Cys85, and Cys78–Cys90. Tyr28, Gly30, and Gly32 together coordinate Ca(2+). Residue His48 is part of the active site. Asp49 lines the Ca(2+) pocket. Asp93 is an active-site residue.

Belongs to the phospholipase A2 family. Group I subfamily. D49 sub-subfamily. In terms of assembly, monomer. It depends on Ca(2+) as a cofactor. Expressed by the venom gland.

It is found in the secreted. It catalyses the reaction a 1,2-diacyl-sn-glycero-3-phosphocholine + H2O = a 1-acyl-sn-glycero-3-phosphocholine + a fatty acid + H(+). Its function is as follows. Snake venom phospholipase A2 (PLA2) that inhibits neuromuscular transmission by blocking acetylcholine release from the nerve termini. Is directly toxic to skeletal muscle upon local application in vivo (dystrophic effect). Also has direct nephrotoxicity in experimental mice; a single subcutaneous dose (1.38 ug/kg) produces renal tubular and glomerular damage within 24 hours. PLA2 catalyzes the calcium-dependent hydrolysis of the 2-acyl groups in 3-sn-phosphoglycerides. This Notechis scutatus scutatus (Mainland tiger snake) protein is Basic phospholipase A2 notexin.